A 246-amino-acid polypeptide reads, in one-letter code: Small ribosomal subunit protein uS2 (246 aa).

It belongs to the universal ribosomal protein uS2 family.

This is Small ribosomal subunit protein uS2 from Burkholderia cenocepacia (strain HI2424).